Consider the following 248-residue polypeptide: 3-deoxy-manno-octulosonate cytidylyltransferase (248 aa).

The protein belongs to the KdsB family.

It localises to the cytoplasm. It carries out the reaction 3-deoxy-alpha-D-manno-oct-2-ulosonate + CTP = CMP-3-deoxy-beta-D-manno-octulosonate + diphosphate. The protein operates within nucleotide-sugar biosynthesis; CMP-3-deoxy-D-manno-octulosonate biosynthesis; CMP-3-deoxy-D-manno-octulosonate from 3-deoxy-D-manno-octulosonate and CTP: step 1/1. It functions in the pathway bacterial outer membrane biogenesis; lipopolysaccharide biosynthesis. Its function is as follows. Activates KDO (a required 8-carbon sugar) for incorporation into bacterial lipopolysaccharide in Gram-negative bacteria. The sequence is that of 3-deoxy-manno-octulosonate cytidylyltransferase from Escherichia coli O139:H28 (strain E24377A / ETEC).